We begin with the raw amino-acid sequence, 193 residues long: Imidazoleglycerol-phosphate dehydratase (193 aa).

The protein belongs to the imidazoleglycerol-phosphate dehydratase family.

It is found in the cytoplasm. The enzyme catalyses D-erythro-1-(imidazol-4-yl)glycerol 3-phosphate = 3-(imidazol-4-yl)-2-oxopropyl phosphate + H2O. It participates in amino-acid biosynthesis; L-histidine biosynthesis; L-histidine from 5-phospho-alpha-D-ribose 1-diphosphate: step 6/9. The polypeptide is Imidazoleglycerol-phosphate dehydratase (Saccharolobus islandicus (strain Y.G.57.14 / Yellowstone #1) (Sulfolobus islandicus)).